A 188-amino-acid chain; its full sequence is dCTP deaminase (188 aa).

DCTP contacts are provided by residues 111–116, 135–137, Q156, Y170, and Q180; these read KSTYAR and TLE. Residue E137 is the Proton donor/acceptor of the active site.

Belongs to the dCTP deaminase family. In terms of assembly, homotrimer.

The catalysed reaction is dCTP + H2O + H(+) = dUTP + NH4(+). Its pathway is pyrimidine metabolism; dUMP biosynthesis; dUMP from dCTP (dUTP route): step 1/2. Its function is as follows. Catalyzes the deamination of dCTP to dUTP. The polypeptide is dCTP deaminase (Azotobacter vinelandii (strain DJ / ATCC BAA-1303)).